We begin with the raw amino-acid sequence, 101 residues long: uncharacterized protein (101 aa).

The helical transmembrane segment at 77–99 (VFSFMNGFTDGCICGTIIILCLI) threads the bilayer.

It is found in the membrane. This is an uncharacterized protein from Acanthamoeba polyphaga mimivirus (APMV).